Reading from the N-terminus, the 87-residue chain is Pro-gurmarin (87 aa).

The first 20 residues, 1–20 (MAKFAAIVLLILVASATVNA), serve as a signal peptide directing secretion. The propeptide occupies 21-52 (VKEHDELPTTGMSRKILLQPVFKSLIISIAEG). At Q53 the chain carries Pyrrolidone carboxylic acid. Cystine bridges form between C55-C70, C62-C75, and C69-C85.

Expressed in leaves (at protein level).

In terms of biological role, peptide that strongly, but reversibly, suppresses the sweet taste-response to various sweeteners, including sugars, sweet amino acids and the artificial sweetener saccharin. In rodents, potentially binds to a sweet taste receptor present on apical microvilli of a subset of taste bud cells. Highly effective at blocking the sweet taste-response in rodents such as rats and mice, though mice may possess a mix of gurmarin-sensitive and -insensitive receptors. Has almost no effect on the sweet taste-response in humans. Inhibits Staphylococcus aureus biofilm formation without affecting bacterial viability. May be one of at least 9 different disulfide-rich peptides produced with varying properties. The polypeptide is Pro-gurmarin (Gymnema sylvestre (Gurmar)).